Here is a 685-residue protein sequence, read N- to C-terminus: Mannan-binding lectin serine protease 2 (685 aa).

The signal sequence occupies residues 1 to 19 (MRLLIFLGLLWSLVATLLG). The CUB 1 domain occupies 20–137 (SKWPEPVFGR…TGFEAFYAAE (118 aa)). The Ca(2+) site is built by E67 and D75. An intrachain disulfide couples C72 to C90. N103 carries N-linked (GlcNAc...) asparagine glycosylation. D120, S122, N123, D138, and E141 together coordinate Ca(2+). An EGF-like; calcium-binding domain is found at 138 to 181 (DVDECRVSLGDSVPCDHYCHNYLGGYYCSCRAGYVLHQNKHTCS). Intrachain disulfides connect C142–C156, C152–C165, C167–C180, C184–C211, and C241–C259. Positions 158 and 162 each coordinate Ca(2+). N158 is subject to (3R)-3-hydroxyasparagine. Positions 184–296 (CSGQVFTGRS…TGWKIHYTST (113 aa)) constitute a CUB 2 domain. Residues N285 and N308 are each glycosylated (N-linked (GlcNAc...) asparagine). 2 consecutive Sushi domains span residues 298–363 (RPCP…ECSI) and 364–431 (IDCG…VCEP). Intrachain disulfides connect C300–C348, C328–C361, C366–C411, C396–C429, C433–C552, C598–C617, and C628–C659. Residues 444 to 683 (IVGGQPAKPG…YIPWIENIIS (240 aa)) enclose the Peptidase S1 domain. Residues H483 and D532 each act as charge relay system in the active site. A glycan (N-linked (GlcNAc...) asparagine) is linked at N545. S632 functions as the Charge relay system in the catalytic mechanism. An N-linked (GlcNAc...) asparagine glycan is attached at N641.

Belongs to the peptidase S1 family. Homodimer; disulfide-linked. Binds MBL2. Isoform 2 binds to MASP1. Binds SERPING1. Post-translationally, the iron and 2-oxoglutarate dependent 3-hydroxylation of aspartate and asparagine is (R) stereospecific within EGF domains. Plasma.

It is found in the secreted. The enzyme catalyses Selective cleavage after Arg-223 in complement component C2 (-Ser-Leu-Gly-Arg-|-Lys-Ile-Gln-Ile) and after Arg-76 in complement component C4 (-Gly-Leu-Gln-Arg-|-Ala-Leu-Glu-Ile).. Functionally, serum protease that plays an important role in the activation of the complement system via mannose-binding lectin. After activation by auto-catalytic cleavage it cleaves C2 and C4, leading to their activation and to the formation of C3 convertase. The protein is Mannan-binding lectin serine protease 2 (Masp2) of Mus musculus (Mouse).